Reading from the N-terminus, the 367-residue chain is Aspartate-semialdehyde dehydrogenase (367 aa).

NADP(+) is bound by residues 10–13 (RGMV), 37–38 (TS), and glutamine 73. Arginine 102 provides a ligand contact to phosphate. Residue cysteine 135 is the Acyl-thioester intermediate of the active site. Cysteine 135 carries the S-cysteinyl cysteine; in inhibited form modification. Glutamine 162 provides a ligand contact to substrate. Residues 165–169 (SGGGA), arginine 173, and proline 193 contribute to the NADP(+) site. A substrate-binding site is contributed by glutamate 241. Lysine 244 contacts phosphate. Arginine 267 is a binding site for substrate. Catalysis depends on histidine 274, which acts as the Proton acceptor. Glutamine 350 lines the NADP(+) pocket.

It belongs to the aspartate-semialdehyde dehydrogenase family. In terms of assembly, homodimer.

The catalysed reaction is L-aspartate 4-semialdehyde + phosphate + NADP(+) = 4-phospho-L-aspartate + NADPH + H(+). It participates in amino-acid biosynthesis; L-lysine biosynthesis via DAP pathway; (S)-tetrahydrodipicolinate from L-aspartate: step 2/4. The protein operates within amino-acid biosynthesis; L-methionine biosynthesis via de novo pathway; L-homoserine from L-aspartate: step 2/3. It functions in the pathway amino-acid biosynthesis; L-threonine biosynthesis; L-threonine from L-aspartate: step 2/5. Is inhibited by L- and D-cystine, and by other cystine derivatives, via the formation of a covalently bound cysteine at the active site Cys-135. In terms of biological role, catalyzes the NADPH-dependent formation of L-aspartate-semialdehyde (L-ASA) by the reductive dephosphorylation of L-aspartyl-4-phosphate. This chain is Aspartate-semialdehyde dehydrogenase, found in Escherichia coli (strain K12).